A 258-amino-acid chain; its full sequence is Thiamine thiazole synthase (258 aa).

NAD(+) contacts are provided by residues A36, 55–56 (EK), G63, V127, and 154–156 (HVD). D156 and H171 together coordinate Fe cation. M224 contacts NAD(+). R234 provides a ligand contact to glycine.

Belongs to the THI4 family. As to quaternary structure, homooctamer; tetramer of dimers. Fe(2+) is required as a cofactor.

It carries out the reaction hydrogen sulfide + glycine + NAD(+) = ADP-5-ethyl-4-methylthiazole-2-carboxylate + nicotinamide + 3 H2O + H(+). The protein operates within cofactor biosynthesis; thiamine diphosphate biosynthesis. Functionally, involved in the biosynthesis of the thiazole moiety of thiamine. Catalyzes the conversion of NAD and glycine to adenosine diphosphate 5-(2-hydroxyethyl)-4-methylthiazole-2-carboxylate (ADT), an adenylated thiazole intermediate, using free sulfide as a source of sulfur. The chain is Thiamine thiazole synthase from Methanococcoides burtonii (strain DSM 6242 / NBRC 107633 / OCM 468 / ACE-M).